We begin with the raw amino-acid sequence, 444 residues long: MREIVHIQAGQCGNQIGSKFWEVISDEHGIDPLGQYHGDSDLQLERINVYYNEVQKKRYVPRAILVDLEPGTMDSVRAGAFGQLFRPDNYVFGQSGAGNNWAKGHYTEGAELVDSVLDVIRKEAEACDCLQGFQFTHSLGGGTGSGMGTLLISKIREEYPDRIMTTFSVVPSPKVSDTVVEPYNATLSVHQLVENTDETFCIDNEALYDICFRTLKLTTPTYGDLNHLVSATMSGVTTCLRFPGQLNADLRKLAVNMVPFPRLHFFMPGFAPLTSRSNQQYRAVTVAELTQQLFDAKNMMAACDPRHGRYLTAAAIFRGRMSMKDVDEQMLNIQNKNSAYFVDWIPNNVKTAVCDIPPRDLKMAATFIGNSTAIQELFKRVSEQFTAMFRRKAFLHWYTGEGMDEMEFTEAESNMNDLVSEYQQYQDASADDELNETIEQAETE.

Residues glutamine 11, glutamate 69, serine 138, glycine 142, threonine 143, glycine 144, asparagine 204, and asparagine 226 each coordinate GTP. Mg(2+) is bound at residue glutamate 69.

It belongs to the tubulin family. Dimer of alpha and beta chains. A typical microtubule is a hollow water-filled tube with an outer diameter of 25 nm and an inner diameter of 15 nM. Alpha-beta heterodimers associate head-to-tail to form protofilaments running lengthwise along the microtubule wall with the beta-tubulin subunit facing the microtubule plus end conferring a structural polarity. Microtubules usually have 13 protofilaments but different protofilament numbers can be found in some organisms and specialized cells. It depends on Mg(2+) as a cofactor.

It localises to the cytoplasm. The protein localises to the cytoskeleton. In terms of biological role, tubulin is the major constituent of microtubules, a cylinder consisting of laterally associated linear protofilaments composed of alpha- and beta-tubulin heterodimers. Microtubules grow by the addition of GTP-tubulin dimers to the microtubule end, where a stabilizing cap forms. Below the cap, tubulin dimers are in GDP-bound state, owing to GTPase activity of alpha-tubulin. This Onchocerca gibsoni protein is Tubulin beta chain (TBB).